A 363-amino-acid polypeptide reads, in one-letter code: Phospho-N-acetylmuramoyl-pentapeptide-transferase (363 aa).

Helical transmembrane passes span 27–47 (SGCACLTALVISLALGNPFIA), 76–96 (TMGGMLILIALFSATLLWADL), 97–117 (TNGFVWAVMLTTAAFGAVGFA), 137–157 (LGCEFLASLIAGIWLQSLTPP), 171–191 (VLLPLGYAFPIFAMITITGFG), 202–222 (GLAIVPVVIAALVFALISYLV), 242–262 (LAVFCAALIGAGLGFLWFNAP), 265–285 (AVFMGDTGSLSLGGALGAVAV), 292–312 (VLCIVGGVFVAETLSVVIQIF), and 340–360 (KIVIRFWIVSIVLGLCGLATL).

This sequence belongs to the glycosyltransferase 4 family. MraY subfamily. Mg(2+) is required as a cofactor.

The protein resides in the cell inner membrane. It carries out the reaction UDP-N-acetyl-alpha-D-muramoyl-L-alanyl-gamma-D-glutamyl-meso-2,6-diaminopimeloyl-D-alanyl-D-alanine + di-trans,octa-cis-undecaprenyl phosphate = di-trans,octa-cis-undecaprenyl diphospho-N-acetyl-alpha-D-muramoyl-L-alanyl-D-glutamyl-meso-2,6-diaminopimeloyl-D-alanyl-D-alanine + UMP. Its pathway is cell wall biogenesis; peptidoglycan biosynthesis. Functionally, catalyzes the initial step of the lipid cycle reactions in the biosynthesis of the cell wall peptidoglycan: transfers peptidoglycan precursor phospho-MurNAc-pentapeptide from UDP-MurNAc-pentapeptide onto the lipid carrier undecaprenyl phosphate, yielding undecaprenyl-pyrophosphoryl-MurNAc-pentapeptide, known as lipid I. The chain is Phospho-N-acetylmuramoyl-pentapeptide-transferase from Gluconobacter oxydans (strain 621H) (Gluconobacter suboxydans).